A 273-amino-acid chain; its full sequence is Large ribosomal subunit protein uL2 (273 aa).

Positions 224-263 (AMNPVDHPHGGGEGRNFGKHPVTPWGLQTKGKKTRKNKRT) are disordered. Positions 253 to 263 (KGKKTRKNKRT) are enriched in basic residues.

This sequence belongs to the universal ribosomal protein uL2 family. In terms of assembly, part of the 50S ribosomal subunit. Forms a bridge to the 30S subunit in the 70S ribosome.

In terms of biological role, one of the primary rRNA binding proteins. Required for association of the 30S and 50S subunits to form the 70S ribosome, for tRNA binding and peptide bond formation. It has been suggested to have peptidyltransferase activity; this is somewhat controversial. Makes several contacts with the 16S rRNA in the 70S ribosome. The chain is Large ribosomal subunit protein uL2 from Buchnera aphidicola subsp. Schizaphis graminum (strain Sg).